The sequence spans 490 residues: Myocilin (490 aa).

The signal sequence occupies residues 1–18; it reads MPAVQLLLLAGLVWGAGA. Residues 55–170 are a coiled coil; it reads SAIQDLQRDS…QEVARLARGQ (116 aa). The segment at 168–187 is disordered; the sequence is RGQCPQARDTSQDVPAGSRE. The region spanning 230-489 is the Olfactomedin-like domain; that stretch reads GCGELVWVGQ…MVTYDIKLSK (260 aa). C231 and C419 are disulfide-bonded. Residues D366, N414, A415, I463, and D464 each coordinate Ca(2+). The Microbody targeting signal signature appears at 488–490; the sequence is SKI.

As to quaternary structure, homodimer (via N-terminus). Can also form higher oligomers. Interacts with OLFM3, FN1, NRCAM, GLDN and NFASC. Interacts (via N-terminus) with MYL2. Interacts with SFRP1, FRZB, FZD7, FZD10, FZD1 and WIF1; regulates Wnt signaling. Interacts with SNTA1; regulates muscle hypertrophy. Interacts with ERBB2 and ERBB3; activates ERBB2-ERBB3 signaling pathway. Interacts with SNCG; affects its secretion and its aggregation. Palmitoylated. Post-translationally, glycosylated. In terms of processing, undergoes a calcium-dependent proteolytic cleavage at Arg-212 by CAPN2 in the endoplasmic reticulum. The result is the production of two fragments, one of 35 kDa containing the C-terminal olfactomedin-like domain, and another of 20 kDa containing the N-terminal leucine zipper-like domain. As to expression, detected in eye aqueous humor (at protein level).

It is found in the secreted. Its subcellular location is the golgi apparatus. It localises to the cytoplasmic vesicle. The protein resides in the extracellular space. The protein localises to the extracellular matrix. It is found in the extracellular exosome. Its subcellular location is the mitochondrion. It localises to the mitochondrion intermembrane space. The protein resides in the mitochondrion inner membrane. The protein localises to the mitochondrion outer membrane. It is found in the rough endoplasmic reticulum. Its subcellular location is the cell projection. It localises to the cilium. The protein resides in the endoplasmic reticulum. In terms of biological role, secreted glycoprotein regulating the activation of different signaling pathways in adjacent cells to control different processes including cell adhesion, cell-matrix adhesion, cytoskeleton organization and cell migration. Promotes substrate adhesion, spreading and formation of focal contacts. Negatively regulates cell-matrix adhesion and stress fiber assembly through Rho protein signal transduction. Modulates the organization of actin cytoskeleton by stimulating the formation of stress fibers through interactions with components of Wnt signaling pathways. Promotes cell migration through activation of PTK2 and the downstream phosphatidylinositol 3-kinase signaling. Plays a role in bone formation and promotes osteoblast differentiation in a dose-dependent manner through mitogen-activated protein kinase signaling. Mediates myelination in the peripheral nervous system through ERBB2/ERBB3 signaling. Plays a role as a regulator of muscle hypertrophy through the components of dystrophin-associated protein complex. Involved in positive regulation of mitochondrial depolarization. Plays a role in neurite outgrowth. May participate in the obstruction of fluid outflow in the trabecular meshwork. The polypeptide is Myocilin (Oryctolagus cuniculus (Rabbit)).